A 344-amino-acid polypeptide reads, in one-letter code: Protein RecA (344 aa).

65 to 72 (GPESSGKT) contacts ATP.

This sequence belongs to the RecA family.

It localises to the cytoplasm. In terms of biological role, can catalyze the hydrolysis of ATP in the presence of single-stranded DNA, the ATP-dependent uptake of single-stranded DNA by duplex DNA, and the ATP-dependent hybridization of homologous single-stranded DNAs. It interacts with LexA causing its activation and leading to its autocatalytic cleavage. This Nitratiruptor sp. (strain SB155-2) protein is Protein RecA.